Here is a 131-residue protein sequence, read N- to C-terminus: Translation initiation factor 5A (131 aa).

Lys-36 is subject to Hypusine.

This sequence belongs to the eIF-5A family.

It is found in the cytoplasm. Functions by promoting the formation of the first peptide bond. This Saccharolobus islandicus (strain Y.N.15.51 / Yellowstone #2) (Sulfolobus islandicus) protein is Translation initiation factor 5A (eIF5A).